A 169-amino-acid polypeptide reads, in one-letter code: MEGKRNHQIIHSSDLFLTLVGNSSGTSSGSFWVQVVRWLRWLQVFVQFEDQWNTSWDVQLSNVSIRDTFQVLNQTSQGVTVSGDHDGLTTQQVLGNDILPVWQQSVNDQSQRFSFWQDIWVNVLVSFITLLREWRRSVDWGRWNIEGSSVGVEFFFTELLQSFSLVLTL.

This is an uncharacterized protein from Saccharomyces cerevisiae (strain ATCC 204508 / S288c) (Baker's yeast).